We begin with the raw amino-acid sequence, 294 residues long: Formamidopyrimidine-DNA glycosylase (294 aa).

Pro2 (schiff-base intermediate with DNA) is an active-site residue. Residue Glu3 is the Proton donor of the active site. The active-site Proton donor; for beta-elimination activity is Lys61. Residues His104, Arg123, and Lys169 each coordinate DNA. Residues 255–289 (AVYGRQDEPCRRCGAPIVREKFMNRSSYSCPRCQP) form an FPG-type zinc finger. Arg279 (proton donor; for delta-elimination activity) is an active-site residue.

This sequence belongs to the FPG family. In terms of assembly, monomer. It depends on Zn(2+) as a cofactor.

It carries out the reaction Hydrolysis of DNA containing ring-opened 7-methylguanine residues, releasing 2,6-diamino-4-hydroxy-5-(N-methyl)formamidopyrimidine.. The catalysed reaction is 2'-deoxyribonucleotide-(2'-deoxyribose 5'-phosphate)-2'-deoxyribonucleotide-DNA = a 3'-end 2'-deoxyribonucleotide-(2,3-dehydro-2,3-deoxyribose 5'-phosphate)-DNA + a 5'-end 5'-phospho-2'-deoxyribonucleoside-DNA + H(+). Involved in base excision repair of DNA damaged by oxidation or by mutagenic agents. Acts as a DNA glycosylase that recognizes and removes damaged bases. Has a preference for oxidized purines, such as 7,8-dihydro-8-oxoguanine (8-oxoG). Has AP (apurinic/apyrimidinic) lyase activity and introduces nicks in the DNA strand. Cleaves the DNA backbone by beta-delta elimination to generate a single-strand break at the site of the removed base with both 3'- and 5'-phosphates. The protein is Formamidopyrimidine-DNA glycosylase of Nocardia farcinica (strain IFM 10152).